We begin with the raw amino-acid sequence, 113 residues long: MLPCLALLLLMELSVCTVAGDGGEEQTLSTEAETWVIVALEEGAGPSIQLQLQEVKTGKASQFFGLMGKRVGGRPLIQPRRKKAYQLEHTFQGLLGKRSLFTEGREDEAQGSE.

Positions 1 to 20 (MLPCLALLLLMELSVCTVAG) are cleaved as a signal peptide. Met-67 is modified (methionine amide). Residues 71-79 (VGGRPLIQP) constitute a propeptide that is removed on maturation. Position 95 is a leucine amide (Leu-95). Residues 98–113 (RSLFTEGREDEAQGSE) constitute a propeptide that is removed on maturation.

Belongs to the tachykinin family. In terms of tissue distribution, expressed at low levels in the uterus of both pregnant and non-pregnant women. Isoform 1 is found only in the adrenal gland and fetal liver. Isoform 2 is found in heart, liver, bone marrow, prostate, adrenal gland and testis. Isoform 3 and isoform 4 are expressed predominantly in adrenal gland and placenta.

It localises to the secreted. In terms of biological role, tachykinins are active peptides which excite neurons, evoke behavioral responses, are potent vasodilators and secretagogues, and contract (directly or indirectly) many smooth muscles. Endokinin-A induces thermal hyperalgesia and pain-related behavior such as scratching following intrathecal administration in rats. These effects are suppressed by treatment with endokinin-C. Endokinin-A/B reduces arterial blood pressure and increases sperm motility. This chain is Tachykinin-4, found in Homo sapiens (Human).